Reading from the N-terminus, the 326-residue chain is 5-dehydro-2-deoxygluconokinase (326 aa).

Belongs to the carbohydrate kinase PfkB family.

It carries out the reaction 5-dehydro-2-deoxy-D-gluconate + ATP = 6-phospho-5-dehydro-2-deoxy-D-gluconate + ADP + H(+). It functions in the pathway polyol metabolism; myo-inositol degradation into acetyl-CoA; acetyl-CoA from myo-inositol: step 5/7. Functionally, catalyzes the phosphorylation of 5-dehydro-2-deoxy-D-gluconate (2-deoxy-5-keto-D-gluconate or DKG) to 6-phospho-5-dehydro-2-deoxy-D-gluconate (DKGP). The polypeptide is 5-dehydro-2-deoxygluconokinase (Lacticaseibacillus casei (Lactobacillus casei)).